The primary structure comprises 396 residues: MSIVINNIGLLVTNDPSVGTDELGQIRNAAVVICGDRIAWVGPSAQAPAADHQSDMAGACVIPGFVDSHSHPVFAGDRSDEFDARMNGQRYEAGGILRTVRRTREAPMGFLDAVMTGILDEMARSGTTTVEAKTGYGLDVETEVKLARVASSHTDEVTFLGAHVVAPECQPDEYVRLVCGEMLHAVRPYVRWIDVFCETGAFDPDQTLEILRAGTDAGLGLRLHAAQLGPSEVIPQACELGLAAVDHCTFLSDEDIDALKATGTVATLLPAAEFSTKQPYPDARRLFDAGVTVALATDCNPGTAFTSSIPFCLAIAVREMGMTPEQALWSATAGGAAALHRDDVGVVKPGARADLVSLAAPSWLHLMYRPGVPLIDRVCKAGRFLRLDQPRLRLDG.

His69 and His71 together coordinate Fe(3+). 2 residues coordinate Zn(2+): His69 and His71. The 4-imidazolone-5-propanoate site is built by Arg78, Tyr136, and His163. Tyr136 lines the N-formimidoyl-L-glutamate pocket. A Fe(3+)-binding site is contributed by His224. Position 224 (His224) interacts with Zn(2+). Residue Gln227 coordinates 4-imidazolone-5-propanoate. Asp298 provides a ligand contact to Fe(3+). Residue Asp298 coordinates Zn(2+). Asn300 and Gly302 together coordinate N-formimidoyl-L-glutamate. Thr303 is a 4-imidazolone-5-propanoate binding site.

Belongs to the metallo-dependent hydrolases superfamily. HutI family. It depends on Zn(2+) as a cofactor. Fe(3+) serves as cofactor.

The protein resides in the cytoplasm. It carries out the reaction 4-imidazolone-5-propanoate + H2O = N-formimidoyl-L-glutamate. It participates in amino-acid degradation; L-histidine degradation into L-glutamate; N-formimidoyl-L-glutamate from L-histidine: step 3/3. Functionally, catalyzes the hydrolytic cleavage of the carbon-nitrogen bond in imidazolone-5-propanoate to yield N-formimidoyl-L-glutamate. It is the third step in the universal histidine degradation pathway. This is Imidazolonepropionase from Cutibacterium acnes (strain DSM 16379 / KPA171202) (Propionibacterium acnes).